Here is a 141-residue protein sequence, read N- to C-terminus: Nucleoside triphosphatase NudI (141 aa).

One can recognise a Nudix hydrolase domain in the interval 1–141; that stretch reads MRQRTIVCPL…RHTLALKGLL (141 aa). Positions 38–59 match the Nudix box motif; it reads GGVEPGERIEEALRREVREELG.

Belongs to the Nudix hydrolase family. NudI subfamily. Monomer. Requires Mg(2+) as cofactor.

It catalyses the reaction a ribonucleoside 5'-triphosphate + H2O = a ribonucleoside 5'-phosphate + diphosphate + H(+). The enzyme catalyses a 2'-deoxyribonucleoside 5'-triphosphate + H2O = a 2'-deoxyribonucleoside 5'-phosphate + diphosphate + H(+). The catalysed reaction is dUTP + H2O = dUMP + diphosphate + H(+). It carries out the reaction dTTP + H2O = dTMP + diphosphate + H(+). It catalyses the reaction dCTP + H2O = dCMP + diphosphate + H(+). Its function is as follows. Catalyzes the hydrolysis of nucleoside triphosphates, with a preference for pyrimidine deoxynucleoside triphosphates (dUTP, dTTP and dCTP). This chain is Nucleoside triphosphatase NudI, found in Salmonella schwarzengrund (strain CVM19633).